A 583-amino-acid chain; its full sequence is Pectinesterase/pectinesterase inhibitor U1 (583 aa).

An N-terminal signal peptide occupies residues 1 to 40 (MTRVEDFFSKQIDFCKRKKKIYLAIVASVLLVAAVIGVVA). The tract at residues 60 to 221 (SSAHAIVKSA…EKMCSNALAM (162 aa)) is pectinesterase inhibitor U1. 3 N-linked (GlcNAc...) asparagine glycosylation sites follow: Asn85, Asn105, and Asn224. A pectinesterase U1 region spans residues 272 to 570 (DVVVAADGSG…TPGRFIAGGS (299 aa)). Thr347 and Gln377 together coordinate substrate. The active-site Proton donor; for pectinesterase activity is Asp400. The cysteines at positions 414 and 434 are disulfide-linked. Residue Asp421 is the Nucleophile; for pectinesterase activity of the active site. Substrate-binding residues include Arg489 and Trp491.

In the N-terminal section; belongs to the PMEI family. The protein in the C-terminal section; belongs to the pectinesterase family.

It is found in the secreted. The protein resides in the cell wall. The enzyme catalyses [(1-&gt;4)-alpha-D-galacturonosyl methyl ester](n) + n H2O = [(1-&gt;4)-alpha-D-galacturonosyl](n) + n methanol + n H(+). Its pathway is glycan metabolism; pectin degradation; 2-dehydro-3-deoxy-D-gluconate from pectin: step 1/5. Its function is as follows. Acts in the modification of cell walls via demethylesterification of cell wall pectin. The polypeptide is Pectinesterase/pectinesterase inhibitor U1 (PMEU1) (Solanum lycopersicum (Tomato)).